The primary structure comprises 466 residues: ATP synthase subunit beta (466 aa).

ATP is bound at residue 148-155 (GGAGVGKT).

Belongs to the ATPase alpha/beta chains family. F-type ATPases have 2 components, CF(1) - the catalytic core - and CF(0) - the membrane proton channel. CF(1) has five subunits: alpha(3), beta(3), gamma(1), delta(1), epsilon(1). CF(0) has three main subunits: a(1), b(2) and c(9-12). The alpha and beta chains form an alternating ring which encloses part of the gamma chain. CF(1) is attached to CF(0) by a central stalk formed by the gamma and epsilon chains, while a peripheral stalk is formed by the delta and b chains.

It localises to the cell inner membrane. It catalyses the reaction ATP + H2O + 4 H(+)(in) = ADP + phosphate + 5 H(+)(out). Functionally, produces ATP from ADP in the presence of a proton gradient across the membrane. The catalytic sites are hosted primarily by the beta subunits. The polypeptide is ATP synthase subunit beta (Herminiimonas arsenicoxydans).